Here is a 4456-residue protein sequence, read N- to C-terminus: Dynein axonemal heavy chain 2 (4456 aa).

Positions 1-12 are enriched in basic residues; sequence MASKAEKKRKVA. The tract at residues 1 to 55 is disordered; it reads MASKAEKKRKVAGRGGARAGRVVRAPQSTAGPGATEASLLPDGQEPEPESGKEDS. Residues 1–1795 form a stem region; it reads MASKAEKKRK…RQTNTQFQYG (1795 aa). Residues 1218-1274 adopt a coiled-coil conformation; sequence LDQIAQMRAMLMAMRDEENNLRSNLGIFKIEQPVSKDLQILEKELDALQQVWEITRD. The stretch at 1439-1474 is one TPR 1 repeat; it reads EDNQVALSTMKASRFVKAFEKDVDHWERCLSLILEV. AAA stretches follow at residues 1794–2015, 2075–2302, 2407–2654, and 2751–3003; these read YGYE…LLRY, DTIE…DNCN, RYPP…VFQG, and EYNL…LRRY. Residues 1832 to 1839, 2113 to 2120, and 2445 to 2452 each bind ATP; these read GPAGTGKT, GGTGSSKT, and GPVGTGKT. Residues 2750 to 2783 form a TPR 2 repeat; it reads NEYNLSPSVVPMQLVLFREAIEHITRIVRVIGQP. Residue 2791 to 2798 coordinates ATP; that stretch reads GIGGSGRQ. The stalk stretch occupies residues 3018–3301; it reads YKKLLGEKRQ…EELRKKSEEM (284 aa). The stretch at 3041-3078 forms a coiled coil; the sequence is FKIDETREKVEVMSLELEDAKKKVAEFQKQCEEYLVII. One copy of the TPR 3 repeat lies at 3101 to 3134; that stretch reads IEEVKCQALADNAQKDLEEALPALEEAMRALESL. 2 coiled-coil regions span residues 3245 to 3333 and 3552 to 3596; these read KRIR…EEDL and VRKE…GSLL. AAA stretches follow at residues 3387-3617 and 3833-4052; these read LTNP…EVTE and VTSF…LLSL. TPR repeat units follow at residues 4101-4134 and 4135-4169; these read TTPFYRLSVLDTYYIPKDGSLASYKEYISMLPSM and DPPEAFGQHPNADVASQITEARTLFETLLSLQPQI.

The protein belongs to the dynein heavy chain family. In terms of assembly, part of the axonemal inner dynein arm complex that consists of at least two heavy chains and a number of intermediate and light chains. Interacts with DNAI4.

It is found in the cytoplasm. Its subcellular location is the cytoskeleton. The protein localises to the cilium axoneme. The protein resides in the flagellum axoneme. Functionally, as part of the axonemal inner dynein arm complex plays a central role in ciliary beat. Expressed in sperm flagellum, it is required for sperm motility. Dyneins are microtubule-based molecular motors possessing ATPase activities that can convert the chemical energy of ATP into relative sliding between adjacent microtubule doublets to generate ciliary bending. The chain is Dynein axonemal heavy chain 2 from Mus musculus (Mouse).